A 579-amino-acid chain; its full sequence is Putative truncated flagellar export/assembly protein LfhA (579 aa).

A run of 3 helical transmembrane segments spans residues 86 to 106, 124 to 144, and 177 to 197; these read AIAGMMILAINLIGGVCIGIF, IGDGLVAQIPSLLLSTAAAII, and FVLAVVPGMPHLPFLLFSALL.

Belongs to the FHIPEP (flagella/HR/invasion proteins export pore) family.

The protein localises to the cell inner membrane. This chain is Putative truncated flagellar export/assembly protein LfhA, found in Escherichia coli (strain K12).